Consider the following 230-residue polypeptide: 7-cyano-7-deazaguanine synthase (230 aa).

Residue 16–26 coordinates ATP; the sequence is LSGGLDSMVSG. 4 residues coordinate Zn(2+): Cys195, Cys205, Cys208, and Cys211.

The protein belongs to the QueC family. Requires Zn(2+) as cofactor.

The enzyme catalyses 7-carboxy-7-deazaguanine + NH4(+) + ATP = 7-cyano-7-deazaguanine + ADP + phosphate + H2O + H(+). It functions in the pathway purine metabolism; 7-cyano-7-deazaguanine biosynthesis. Its function is as follows. Catalyzes the ATP-dependent conversion of 7-carboxy-7-deazaguanine (CDG) to 7-cyano-7-deazaguanine (preQ(0)). This Rhizorhabdus wittichii (strain DSM 6014 / CCUG 31198 / JCM 15750 / NBRC 105917 / EY 4224 / RW1) (Sphingomonas wittichii) protein is 7-cyano-7-deazaguanine synthase.